Consider the following 304-residue polypeptide: YEYPQYYLVNPAAYAALGAYMFLLILVGFPINFLTLYVTIEHKKLRTPLNYILLNLAVANLFMVFGGFTTTMFTSIRGYFVLGHLGCNLEGFFATLSGEIALWSLVVLAIERWVVVCKPISNFRFGENHAIMGLAFTWTMAMACAAPPLVGWSRYIPEGMQCSCGIDYYTRAEGFNNESFVVYMFTCHFMTPLTIVFFCYGRLLCAVKEAAAAQQESETTQRAEREVTRMVVIMVIAFLICWCPYAGVAWFIFTHQGSEFGPVFMTIPAFFAKSSSIYNPMIYICLNKQFRHCMITTLCCGKKA.

Topologically, residues 1 to 13 are extracellular; sequence YEYPQYYLVNPAA. The helical transmembrane segment at 14–38 threads the bilayer; the sequence is YAALGAYMFLLILVGFPINFLTLYV. Topologically, residues 39-50 are cytoplasmic; it reads TIEHKKLRTPLN. A helical transmembrane segment spans residues 51 to 73; that stretch reads YILLNLAVANLFMVFGGFTTTMF. Topologically, residues 74-87 are extracellular; sequence TSIRGYFVLGHLGC. A disulfide bridge connects residues C87 and C164. Residues 88-110 form a helical membrane-spanning segment; it reads NLEGFFATLSGEIALWSLVVLAI. The short motif at 111-113 is the 'Ionic lock' involved in activated form stabilization element; sequence ERW. Topologically, residues 111 to 129 are cytoplasmic; it reads ERWVVVCKPISNFRFGENH. The helical transmembrane segment at 130–150 threads the bilayer; sequence AIMGLAFTWTMAMACAAPPLV. Over 151 to 179 the chain is Extracellular; sequence GWSRYIPEGMQCSCGIDYYTRAEGFNNES. A glycan (N-linked (GlcNAc...) asparagine) is linked at N177. Residues 180 to 201 traverse the membrane as a helical segment; that stretch reads FVVYMFTCHFMTPLTIVFFCYG. Residues 202-229 are Cytoplasmic-facing; the sequence is RLLCAVKEAAAAQQESETTQRAEREVTR. The chain crosses the membrane as a helical span at residues 230-251; the sequence is MVVIMVIAFLICWCPYAGVAWF. Topologically, residues 252–263 are extracellular; sequence IFTHQGSEFGPV. A helical membrane pass occupies residues 264 to 285; sequence FMTIPAFFAKSSSIYNPMIYIC. Position 273 is an N6-(retinylidene)lysine (K273). At 286-304 the chain is on the cytoplasmic side; that stretch reads LNKQFRHCMITTLCCGKKA. 2 S-palmitoyl cysteine lipidation sites follow: C299 and C300.

The protein belongs to the G-protein coupled receptor 1 family. Opsin subfamily. In terms of processing, phosphorylated on some or all of the serine and threonine residues present in the C-terminal region. Post-translationally, contains one covalently linked retinal chromophore.

The protein resides in the membrane. Its subcellular location is the cell projection. It is found in the cilium. It localises to the photoreceptor outer segment. Its function is as follows. Photoreceptor required for image-forming vision at low light intensity. While most salt water fish species use retinal as chromophore, most freshwater fish use 3-dehydroretinal, or a mixture of retinal and 3-dehydroretinal. Light-induced isomerization of 11-cis to all-trans retinal triggers a conformational change that activates signaling via G-proteins. Subsequent receptor phosphorylation mediates displacement of the bound G-protein alpha subunit by arrestin and terminates signaling. The polypeptide is Rhodopsin (rho) (Ictalurus punctatus (Channel catfish)).